A 147-amino-acid chain; its full sequence is Ribosome maturation factor RimP (147 aa).

This sequence belongs to the RimP family.

It localises to the cytoplasm. Functionally, required for maturation of 30S ribosomal subunits. This is Ribosome maturation factor RimP from Sulfurihydrogenibium sp. (strain YO3AOP1).